Here is a 236-residue protein sequence, read N- to C-terminus: Large ribosomal subunit protein uL2 (236 aa).

A compositionally biased stretch (polar residues) spans 1-10; the sequence is MGHRITTQSR. Disordered stretches follow at residues 1-20 and 202-236; these read MGHR…YRAP and GGGG…TGRR. The span at 224–236 shows a compositional bias: basic residues; sequence KVGHIAARRTGRR.

It belongs to the universal ribosomal protein uL2 family. As to quaternary structure, part of the 50S ribosomal subunit. Forms a bridge to the 30S subunit in the 70S ribosome.

Functionally, one of the primary rRNA binding proteins. Required for association of the 30S and 50S subunits to form the 70S ribosome, for tRNA binding and peptide bond formation. It has been suggested to have peptidyltransferase activity; this is somewhat controversial. Makes several contacts with the 16S rRNA in the 70S ribosome. The polypeptide is Large ribosomal subunit protein uL2 (Methanospirillum hungatei JF-1 (strain ATCC 27890 / DSM 864 / NBRC 100397 / JF-1)).